A 170-amino-acid polypeptide reads, in one-letter code: Urease accessory protein UreE (170 aa).

Belongs to the UreE family.

Its subcellular location is the cytoplasm. Functionally, involved in urease metallocenter assembly. Binds nickel. Probably functions as a nickel donor during metallocenter assembly. This Helicobacter pylori (strain HPAG1) protein is Urease accessory protein UreE.